The sequence spans 80 residues: Metallothionein-like protein BIF98 (80 aa).

This sequence belongs to the metallothionein superfamily. Type 15 family.

In terms of biological role, metallothioneins have a high content of cysteine residues that bind various heavy metals. In Brassica rapa subsp. pekinensis (Chinese cabbage), this protein is Metallothionein-like protein BIF98.